The following is a 144-amino-acid chain: 3-hydroxyacyl-[acyl-carrier-protein] dehydratase FabZ (144 aa).

Residue His-48 is part of the active site.

This sequence belongs to the thioester dehydratase family. FabZ subfamily.

Its subcellular location is the cytoplasm. It catalyses the reaction a (3R)-hydroxyacyl-[ACP] = a (2E)-enoyl-[ACP] + H2O. In terms of biological role, involved in unsaturated fatty acids biosynthesis. Catalyzes the dehydration of short chain beta-hydroxyacyl-ACPs and long chain saturated and unsaturated beta-hydroxyacyl-ACPs. In Listeria monocytogenes serotype 4b (strain CLIP80459), this protein is 3-hydroxyacyl-[acyl-carrier-protein] dehydratase FabZ.